We begin with the raw amino-acid sequence, 228 residues long: 2-C-methyl-D-erythritol 4-phosphate cytidylyltransferase (228 aa).

The protein belongs to the IspD/TarI cytidylyltransferase family. IspD subfamily.

It catalyses the reaction 2-C-methyl-D-erythritol 4-phosphate + CTP + H(+) = 4-CDP-2-C-methyl-D-erythritol + diphosphate. It functions in the pathway isoprenoid biosynthesis; isopentenyl diphosphate biosynthesis via DXP pathway; isopentenyl diphosphate from 1-deoxy-D-xylulose 5-phosphate: step 2/6. Functionally, catalyzes the formation of 4-diphosphocytidyl-2-C-methyl-D-erythritol from CTP and 2-C-methyl-D-erythritol 4-phosphate (MEP). This is 2-C-methyl-D-erythritol 4-phosphate cytidylyltransferase from Nostoc sp. (strain PCC 7120 / SAG 25.82 / UTEX 2576).